Reading from the N-terminus, the 64-residue chain is MNINDYKDSIIVGVLFLLFTRDWFDELIFGTFPSLKGMPWVFLALKVLGIMVLFYLLDAIINVK.

A helical transmembrane segment spans residues 41 to 61 (VFLALKVLGIMVLFYLLDAII).

The protein resides in the membrane. This is an uncharacterized protein from Acheta domesticus (House cricket).